The chain runs to 123 residues: Putative hypoxanthine phosphoribosyltransferase (123 aa).

May play a role in purine salvage. This chain is Putative hypoxanthine phosphoribosyltransferase, found in Methanosarcina mazei (strain ATCC BAA-159 / DSM 3647 / Goe1 / Go1 / JCM 11833 / OCM 88) (Methanosarcina frisia).